Consider the following 76-residue polypeptide: Large ribosomal subunit protein bL31 (76 aa).

Zn(2+) is bound by residues Cys-16, Cys-18, Cys-37, and Cys-40.

The protein belongs to the bacterial ribosomal protein bL31 family. Type A subfamily. Part of the 50S ribosomal subunit. Requires Zn(2+) as cofactor.

Its function is as follows. Binds the 23S rRNA. This chain is Large ribosomal subunit protein bL31, found in Solibacter usitatus (strain Ellin6076).